Consider the following 232-residue polypeptide: Large ribosomal subunit protein uL1 (232 aa).

Belongs to the universal ribosomal protein uL1 family. In terms of assembly, part of the 50S ribosomal subunit.

Functionally, binds directly to 23S rRNA. The L1 stalk is quite mobile in the ribosome, and is involved in E site tRNA release. Its function is as follows. Protein L1 is also a translational repressor protein, it controls the translation of the L11 operon by binding to its mRNA. The chain is Large ribosomal subunit protein uL1 from Marinobacter nauticus (strain ATCC 700491 / DSM 11845 / VT8) (Marinobacter aquaeolei).